The sequence spans 1174 residues: K(+) efflux antiporter 2, chloroplastic (1174 aa).

Residues 1–57 (MDFASSVQRQSMFHGGADFASYCLPNRMISAKLCPKGLGGTRFWDPMIDSKVRSAIR) constitute a chloroplast transit peptide. The Stromal portion of the chain corresponds to 58 to 565 (SKRNVSYRSS…MFPQQEVNEE (508 aa)). The segment at 119-141 (GSDDREVTFSKEEKDTREQDSAP) is disordered. The stretch at 142–350 (SLEELRDLLN…ALQRAEKTLF (209 aa)) forms a coiled coil. At lysine 170 the chain carries N6-acetyllysine; by NSI. Basic and acidic residues predominate over residues 420 to 448 (EAEGEAEKSKNVVLTKKQEVQKDLPRESS). The tract at residues 420–457 (EAEGEAEKSKNVVLTKKQEVQKDLPRESSSHNGTKTSL) is disordered. A helical transmembrane segment spans residues 566-586 (EASLLDVLWLLLASVIFVPLF). At 587–592 (QKIPGG) the chain is on the chloroplast intermembrane side. The chain crosses the membrane as a helical span at residues 593–613 (SPVLGYLAAGILIGPYGLSII). Residues 614 to 620 (RNVHGTK) are Stromal-facing. Residues 621–641 (AIAEFGVVFLLFNIGLELSVE) form a helical membrane-spanning segment. The Chloroplast intermembrane segment spans residues 642 to 648 (RLSSMKK). A helical membrane pass occupies residues 649-669 (YVFGLGSAQVLVTAAVIGLIT). The Stromal portion of the chain corresponds to 670-678 (HYVAGQAGP). The helical transmembrane segment at 679–699 (AAIVIGNGLALSSTAVVLQVL) threads the bilayer. At 700 to 713 (QERGESTSRHGRAT) the chain is on the chloroplast intermembrane side. The helical transmembrane segment at 714–734 (FSVLLFQDLAVVVLLILIPLI) threads the bilayer. Topologically, residues 735-746 (SPNSSKGGIGFQ) are stromal. Residues 747-767 (AIAEALGLAAIKAAVAITGII) traverse the membrane as a helical segment. At 768–807 (AGGRLLLRPIYKQIAENRNAEIFSANTLLVILGTSLLTAR) the chain is on the chloroplast intermembrane side. The chain crosses the membrane as a helical span at residues 808 to 828 (AGLSMALGAFLAGLLLAETEF). The Stromal portion of the chain corresponds to 829–841 (SLQVESDIAPYRG). A helical transmembrane segment spans residues 842 to 862 (LLLGLFFMTVGMSIDPKLLLA). The Chloroplast intermembrane portion of the chain corresponds to 863 to 865 (NFP). The helical transmembrane segment at 866-886 (LIMGTLGLLLVGKTILVVIIG) threads the bilayer. Residues 887-898 (KLFGISIISAVR) are Stromal-facing. The helical transmembrane segment at 899-919 (VGLLLAPGGEFAFVAFGEAVN) threads the bilayer. At 920–928 (QGIMTPQLS) the chain is on the chloroplast intermembrane side. The chain crosses the membrane as a helical span at residues 929 to 949 (SLLFLVVGISMALTPWLAAGG). Topologically, residues 950-1174 (QLIASRFELQ…NQIIEGTLAI (225 aa)) are stromal. The RCK N-terminal domain occupies 975–1092 (QGHIIICGFG…EKAGATAVVP (118 aa)). The interval 1141 to 1174 (SLGYGFSRSTSKPKPPSPSETSDDNQIIEGTLAI) is disordered.

This sequence belongs to the monovalent cation:proton antiporter 2 (CPA2) transporter (TC 2.A.37) family. KEA (TC 2.A.37.1) subfamily. Acetylated at Lys-170 by the stromal acetyltransferase enzyme NSI. In terms of tissue distribution, detected in leaves, stems and flowers. Expressed in shoots and roots. Mainly localized to leaf veins, hypocotyls, mesophylls and guard cells. Accumulates at high levels in small and dividing plastids (at protein level).

It is found in the plastid. The protein localises to the chloroplast inner membrane. Its subcellular location is the plastid inner membrane. It carries out the reaction K(+)(in) + H(+)(out) = K(+)(out) + H(+)(in). Its activity is regulated as follows. Repressed by sodium ions Na(+). Electroneutral K(+)/H(+) efflux antiporter modulating monovalent cation and pH homeostasis in plastids, especially during plastid division and thylakoid membrane formation. Transports K(+) and Cs(+) preferentially relative to Na(+) or Li(+). May function in osmotic adjustment. Collaboratively with KEA1, adjusts alkaline stromal pH upon light to dark transitions in plastids. Together with KEA1, critical for chloroplast development, including chloroplast RNA-metabolism (e.g. rRNA maturation, polysome loading and RNA-protein interactions) and plastid gene expression (PGE), ion homeostasis, and photosynthesis. Contributes, during early seedling development, to the regulation of photosynthesis and abscisic acid- (ABA-) mediated primary root growth in a sucrose-dependent manner. Involved in the regulation of reactive oxygen and nitrogen species (ROS and RNS) metabolism. Required in roots for rapid hyperosmotic-induced Ca(2+) responses and for osmo-sensory potentiation in hyperosmotic conditions. May counteract resilience to drought and salt stress, involving photorespiratory pathway and stomata closure. This is K(+) efflux antiporter 2, chloroplastic from Arabidopsis thaliana (Mouse-ear cress).